A 91-amino-acid polypeptide reads, in one-letter code: Acylphosphatase (91 aa).

The Acylphosphatase-like domain maps to 3 to 91 (TVTMKVTGLV…EKFTRFSVVY (89 aa)). Catalysis depends on residues R18 and N36.

Belongs to the acylphosphatase family.

It catalyses the reaction an acyl phosphate + H2O = a carboxylate + phosphate + H(+). This chain is Acylphosphatase (acyP), found in Lactobacillus gasseri (strain ATCC 33323 / DSM 20243 / BCRC 14619 / CIP 102991 / JCM 1131 / KCTC 3163 / NCIMB 11718 / NCTC 13722 / AM63).